We begin with the raw amino-acid sequence, 266 residues long: DLA class II histocompatibility antigen, DR-1 beta chain (266 aa).

A signal peptide spans 1–29 (MVCLCFLGGSWMTALMLILMVLNPPFAWA). Residues 30–124 (RDTPPHFLEV…IESFTVQRRV (95 aa)) are beta-1. Residues 30–227 (RDTPPHFLEV…RAQSDSAQSK (198 aa)) are Extracellular-facing. Cystine bridges form between Cys44–Cys108 and Cys146–Cys202. The N-linked (GlcNAc...) asparagine glycan is linked to Asn48. A beta-2 region spans residues 125–227 (EPTVTVYPTK…RAQSDSAQSK (103 aa)). Positions 126–214 (PTVTVYPTKT…EHPSLTSPVT (89 aa)) constitute an Ig-like C1-type domain. A helical membrane pass occupies residues 228 to 250 (MLSGIGGFVLGLLFLAVGLFIYF). Residues 251-266 (RNQKGHSGLQPTGLLS) are Cytoplasmic-facing.

It belongs to the MHC class II family.

It localises to the membrane. In Canis lupus familiaris (Dog), this protein is DLA class II histocompatibility antigen, DR-1 beta chain.